The sequence spans 358 residues: Molybdenum import ATP-binding protein ModC 2 (358 aa).

The region spanning 1–234 (MPEQGIEAQL…PRLPLNHPDE (234 aa)) is the ABC transporter domain. Residue 35–42 (GRSGSGKT) participates in ATP binding. The Mop domain maps to 293 to 358 (NSSILNILRV…AQIKSVALME (66 aa)).

This sequence belongs to the ABC transporter superfamily. Molybdate importer (TC 3.A.1.8) family. As to quaternary structure, the complex is composed of two ATP-binding proteins (ModC), two transmembrane proteins (ModB) and a solute-binding protein (ModA).

Its subcellular location is the cell inner membrane. It carries out the reaction molybdate(out) + ATP + H2O = molybdate(in) + ADP + phosphate + H(+). In terms of biological role, part of the ABC transporter complex ModABC involved in molybdenum import. Responsible for energy coupling to the transport system. The protein is Molybdenum import ATP-binding protein ModC 2 of Azotobacter vinelandii.